A 913-amino-acid polypeptide reads, in one-letter code: Protein SEY1 homolog (913 aa).

Residues 1–825 (MTDVNKTQII…ETGGHMSLKN (825 aa)) lie on the Cytoplasmic side of the membrane. In terms of domain architecture, GB1/RHD3-type G spans 33–288 (GFNYNVIAIL…IPADGFAQYC (256 aa)). Residue 43 to 50 (GSQSSGKS) coordinates GTP. Residues 826 to 846 (VPFAFWVILLILGWNEILMFT) traverse the membrane as a helical segment. Topologically, residues 847-849 (RLF) are lumenal. Residues 850-870 (FRLNIILPMLIGFIIIVISCL) form a helical membrane-spanning segment. The Cytoplasmic portion of the chain corresponds to 871–913 (YTGNAQILSYINKIIFIVIKNLYNFYKHLQTIGHQTTKPEKVE).

It belongs to the TRAFAC class dynamin-like GTPase superfamily. GB1/RHD3 GTPase family. RHD3 subfamily.

The protein resides in the endoplasmic reticulum membrane. Probable GTP-binding protein involved in generating and maintaining the structure of the tubular endoplasmic reticulum network. The protein is Protein SEY1 homolog of Plasmodium berghei (strain Anka).